Reading from the N-terminus, the 324-residue chain is Protoheme IX farnesyltransferase 2 (324 aa).

9 consecutive transmembrane segments (helical) span residues 39–59 (LIKP…MLLA), 63–83 (IPSP…AGSA), 115–135 (HALV…WATT), 137–157 (LLSA…YTLV), 166–186 (IVWG…GVTG), 192–212 (ALVM…SLAM), 239–259 (IVVF…ATGW), 260–280 (LYTA…HRLH), and 302–322 (LMIV…VLGW).

The protein belongs to the UbiA prenyltransferase family. Protoheme IX farnesyltransferase subfamily.

It is found in the cell membrane. It carries out the reaction heme b + (2E,6E)-farnesyl diphosphate + H2O = Fe(II)-heme o + diphosphate. The protein operates within porphyrin-containing compound metabolism; heme O biosynthesis; heme O from protoheme: step 1/1. Functionally, converts heme B (protoheme IX) to heme O by substitution of the vinyl group on carbon 2 of heme B porphyrin ring with a hydroxyethyl farnesyl side group. The protein is Protoheme IX farnesyltransferase 2 of Saccharopolyspora erythraea (strain ATCC 11635 / DSM 40517 / JCM 4748 / NBRC 13426 / NCIMB 8594 / NRRL 2338).